Reading from the N-terminus, the 376-residue chain is UPF0754 membrane protein BLi01057/BL02871 (376 aa).

Helical transmembrane passes span 1 to 21 (MYVF…GAVT) and 356 to 376 (YLGG…VILI).

The protein belongs to the UPF0754 family.

The protein localises to the cell membrane. The protein is UPF0754 membrane protein BLi01057/BL02871 of Bacillus licheniformis (strain ATCC 14580 / DSM 13 / JCM 2505 / CCUG 7422 / NBRC 12200 / NCIMB 9375 / NCTC 10341 / NRRL NRS-1264 / Gibson 46).